The following is a 734-amino-acid chain: Photosystem I P700 chlorophyll a apoprotein A2 (734 aa).

The next 8 helical transmembrane spans lie at 46–69, 135–158, 175–199, 273–291, 330–353, 369–395, 417–439, and 517–535; these read IFASHLGQLAIIFLWTSGNLFHVA, LYTGAFSLLIVSTLFLVAGWLHLE, LNHHLSGLFGVSSLARAGHLVHVAI, IAHHHLAIAVVFIIAGHTY, LHFQLGLALASLGVVTSLVAQHMY, AALYTHHQYIAGFIMTGAFAHGAIFLT, AIISHLSWASLFLGFHTLGLYVH, and FPVHHAIASGLHTTTLILS. 2 residues coordinate [4Fe-4S] cluster: C559 and C568. Transmembrane regions (helical) follow at residues 575 to 596 and 643 to 665; these read AFYPAVFWMLNTIGWVTLHWHW and LSVWAWMFSFGHLVWATGFMFLI. Residues H654, M662, and Y670 each coordinate chlorophyll a. W671 is a binding site for phylloquinone. The helical transmembrane segment at 707–727 threads the bilayer; sequence LVGLAHFSVGYIFTYAAFPIP.

The protein belongs to the PsaA/PsaB family. The PsaA/B heterodimer binds the P700 chlorophyll special pair and subsequent electron acceptors. PSI consists of a core antenna complex that captures photons, and an electron transfer chain that converts photonic excitation into a charge separation. The eukaryotic PSI reaction center is composed of at least 11 subunits. It depends on P700 is a chlorophyll a/chlorophyll a' dimer, A0 is one or more chlorophyll a, A1 is one or both phylloquinones and FX is a shared 4Fe-4S iron-sulfur center. as a cofactor.

It localises to the plastid. The protein resides in the chloroplast thylakoid membrane. It carries out the reaction reduced [plastocyanin] + hnu + oxidized [2Fe-2S]-[ferredoxin] = oxidized [plastocyanin] + reduced [2Fe-2S]-[ferredoxin]. In terms of biological role, psaA and PsaB bind P700, the primary electron donor of photosystem I (PSI), as well as the electron acceptors A0, A1 and FX. PSI is a plastocyanin-ferredoxin oxidoreductase, converting photonic excitation into a charge separation, which transfers an electron from the donor P700 chlorophyll pair to the spectroscopically characterized acceptors A0, A1, FX, FA and FB in turn. Oxidized P700 is reduced on the lumenal side of the thylakoid membrane by plastocyanin. The polypeptide is Photosystem I P700 chlorophyll a apoprotein A2 (Selaginella uncinata (Blue spike-moss)).